We begin with the raw amino-acid sequence, 195 residues long: Ephrin-A2 (195 aa).

Residues 1-16 (MELSLVVFTVVCWVSV) form the signal peptide. Residues 24-157 (SDRHAVYWNS…KLKVYVKPTS (134 aa)) enclose the Ephrin RBD domain. The N-linked (GlcNAc...) asparagine glycan is linked to asparagine 32. Intrachain disulfides connect cysteine 57–cysteine 97 and cysteine 85–cysteine 146. Cysteine 174 is lipidated: GPI-anchor amidated cysteine. A propeptide spans 175 to 195 (GADGPCLAVLMLLLVFLLAGV) (removed in mature form).

It belongs to the ephrin family. In terms of assembly, binds to the receptor tyrosine kinases epha2, epha3, epha4 and epha5. Interacts with epha8; activates epha8. In terms of tissue distribution, widespread expression in the embryo.

Its subcellular location is the cell membrane. In terms of biological role, cell surface GPI-bound ligand for Eph receptors, a family of receptor tyrosine kinases which are crucial for migration, repulsion and adhesion during neuronal, vascular and epithelial development. Binds promiscuously Eph receptors residing on adjacent cells, leading to contact-dependent bidirectional signaling into neighboring cells. The signaling pathway downstream of the receptor is referred to as forward signaling while the signaling pathway downstream of the ephrin ligand is referred to as reverse signaling. With the epha2 receptor may play a role in bone remodeling through regulation of osteoclastogenesis and osteoblastogenesis. This is Ephrin-A2 (efna2) from Danio rerio (Zebrafish).